The following is a 198-amino-acid chain: Penicillin-binding protein activator LpoB (198 aa).

A signal peptide spans 1-20 (MSWIRIRRSGVLLLALVLSG). Cys21 carries the N-palmitoyl cysteine lipid modification. Cys21 is lipidated: S-diacylglycerol cysteine. The interval 28-62 (PQPAAPVEPVTPPVNVPQPPKAEPGQNVPPPPKMQ) is disordered. A compositionally biased stretch (pro residues) spans 30–61 (PAAPVEPVTPPVNVPQPPKAEPGQNVPPPPKM).

This sequence belongs to the LpoB family. In terms of assembly, interacts with PBP1b.

It is found in the cell outer membrane. Functionally, regulator of peptidoglycan synthesis that is essential for the function of penicillin-binding protein 1B (PBP1b). This chain is Penicillin-binding protein activator LpoB, found in Erwinia amylovora (strain CFBP1430).